Consider the following 193-residue polypeptide: Probable chemoreceptor glutamine deamidase CheD 1 (193 aa).

A disordered region spans residues 1–26; it reads MPHTPPAYPAASADHRPPSSPPAEPA.

The protein belongs to the CheD family.

It catalyses the reaction L-glutaminyl-[protein] + H2O = L-glutamyl-[protein] + NH4(+). Functionally, probably deamidates glutamine residues to glutamate on methyl-accepting chemotaxis receptors (MCPs), playing an important role in chemotaxis. The sequence is that of Probable chemoreceptor glutamine deamidase CheD 1 from Chromobacterium violaceum (strain ATCC 12472 / DSM 30191 / JCM 1249 / CCUG 213 / NBRC 12614 / NCIMB 9131 / NCTC 9757 / MK).